Here is a 449-residue protein sequence, read N- to C-terminus: Biotin carboxylase (449 aa).

Positions 1–445 constitute a Biotin carboxylation domain; it reads MLEKVLIANR…NIHYLEKKLG (445 aa). ATP-binding positions include Lys116, Lys159, 165–166, 201–204, His209, and His236; these read GG and EKFL. The ATP-grasp domain maps to 120–317; that stretch reads KDAMKRAGVP…IVKEMLRIAS (198 aa). Residue Lys238 participates in hydrogencarbonate binding. ATP-binding residues include Glu276 and Glu288. The Mg(2+) site is built by Glu276, Glu288, and Asn290. Residues Glu276, Glu288, and Asn290 each contribute to the Mn(2+) site. The hydrogencarbonate site is built by Arg292, Val295, and Arg338. Residue Arg292 is part of the active site. Arg338 contacts biotin.

As to quaternary structure, acetyl-CoA carboxylase is a heterohexamer of biotin carboxyl carrier protein, biotin carboxylase and the two subunits of carboxyl transferase in a 2:2 complex. Mg(2+) serves as cofactor. It depends on Mn(2+) as a cofactor.

It carries out the reaction N(6)-biotinyl-L-lysyl-[protein] + hydrogencarbonate + ATP = N(6)-carboxybiotinyl-L-lysyl-[protein] + ADP + phosphate + H(+). Its pathway is lipid metabolism; malonyl-CoA biosynthesis; malonyl-CoA from acetyl-CoA: step 1/1. Its function is as follows. This protein is a component of the acetyl coenzyme A carboxylase complex; first, biotin carboxylase catalyzes the carboxylation of the carrier protein and then the transcarboxylase transfers the carboxyl group to form malonyl-CoA. The protein is Biotin carboxylase (accC) of Pseudomonas aeruginosa (strain ATCC 15692 / DSM 22644 / CIP 104116 / JCM 14847 / LMG 12228 / 1C / PRS 101 / PAO1).